Here is a 178-residue protein sequence, read N- to C-terminus: Nascent polypeptide-associated complex subunit alpha (178 aa).

An NAC-A/B domain is found at 20 to 84 (SKNEKKAREL…AKVDDMNKRI (65 aa)). Low complexity predominate over residues 87–104 (AQAQQEQQEALTKAAADA). The tract at residues 87–142 (AQAQQEQQEALTKAAADAETADKSPESITNDLQNASLEDKTVEEDEGEVDETGLDS) is disordered. Over residues 112-122 (ESITNDLQNAS) the composition is skewed to polar residues. Positions 127–139 (TVEEDEGEVDETG) are enriched in acidic residues. The 39-residue stretch at 140–178 (LDSKDIEIIVEQTQVSRAKAVKALRAHKGDMVNAIMELS) folds into the UBA domain.

Belongs to the NAC-alpha family. Part of the nascent polypeptide-associated complex (NAC), consisting of EGD2 and EGD1. NAC associates with ribosomes via EGD1.

Its subcellular location is the cytoplasm. It localises to the nucleus. Functionally, component of the nascent polypeptide-associated complex (NAC), a dynamic component of the ribosomal exit tunnel, protecting the emerging polypeptides from interaction with other cytoplasmic proteins to ensure appropriate nascent protein targeting. The NAC complex also promotes mitochondrial protein import by enhancing productive ribosome interactions with the outer mitochondrial membrane and blocks the inappropriate interaction of ribosomes translating non-secretory nascent polypeptides with translocation sites in the membrane of the endoplasmic reticulum. EGD2 may also be involved in transcription regulation. The protein is Nascent polypeptide-associated complex subunit alpha (EGD2) of Meyerozyma guilliermondii (strain ATCC 6260 / CBS 566 / DSM 6381 / JCM 1539 / NBRC 10279 / NRRL Y-324) (Yeast).